A 109-amino-acid polypeptide reads, in one-letter code: Protein reprimo (109 aa).

N-linked (GlcNAc...) asparagine glycosylation is found at asparagine 7 and asparagine 18. A helical membrane pass occupies residues 56-76 (VVQIAVMCVLSLTVVFGIFFL). Serine 98 bears the Phosphoserine mark.

It belongs to the reprimo family.

The protein localises to the cytoplasm. It localises to the membrane. Its function is as follows. May be involved in the regulation of p53-dependent G2 arrest of the cell cycle. Seems to induce cell cycle arrest by inhibiting CDK1 activity and nuclear translocation of the CDC2 cyclin B1 complex. The chain is Protein reprimo (Rprm) from Rattus norvegicus (Rat).